The sequence spans 396 residues: Elongation factor Tu 1 (396 aa).

Residues 10–206 (KPHVNVGTIG…ALDTYIPTPK (197 aa)) enclose the tr-type G domain. A G1 region spans residues 19-26 (GHVDHGKT). 19-26 (GHVDHGKT) provides a ligand contact to GTP. Residue threonine 26 participates in Mg(2+) binding. The G2 stretch occupies residues 60 to 64 (GITIS). Positions 81-84 (DCPG) are G3. Residues 81–85 (DCPGH) and 136–139 (NKAD) each bind GTP. Residues 136–139 (NKAD) are G4. Residues 174 to 176 (SAL) form a G5 region.

It belongs to the TRAFAC class translation factor GTPase superfamily. Classic translation factor GTPase family. EF-Tu/EF-1A subfamily. As to quaternary structure, monomer.

The protein resides in the cytoplasm. It catalyses the reaction GTP + H2O = GDP + phosphate + H(+). GTP hydrolase that promotes the GTP-dependent binding of aminoacyl-tRNA to the A-site of ribosomes during protein biosynthesis. The sequence is that of Elongation factor Tu 1 from Ruthia magnifica subsp. Calyptogena magnifica.